Consider the following 414-residue polypeptide: S-adenosylmethionine synthase (414 aa).

Residue His-11 participates in ATP binding. Asp-13 provides a ligand contact to Mg(2+). Residue Glu-39 participates in K(+) binding. Residues Glu-52 and Gln-95 each coordinate L-methionine. The interval 95-105 is flexible loop; it reads QSPDIAQGVNM. ATP is bound by residues 169-171, 245-246, Asp-254, 260-261, Ala-277, and Lys-281; these read DGK, KF, and RK. Residue Asp-254 participates in L-methionine binding. Lys-285 serves as a coordination point for L-methionine.

The protein belongs to the AdoMet synthase family. As to quaternary structure, homotetramer; dimer of dimers. Mg(2+) is required as a cofactor. Requires K(+) as cofactor.

It is found in the cytoplasm. It catalyses the reaction L-methionine + ATP + H2O = S-adenosyl-L-methionine + phosphate + diphosphate. The protein operates within amino-acid biosynthesis; S-adenosyl-L-methionine biosynthesis; S-adenosyl-L-methionine from L-methionine: step 1/1. Catalyzes the formation of S-adenosylmethionine (AdoMet) from methionine and ATP. The overall synthetic reaction is composed of two sequential steps, AdoMet formation and the subsequent tripolyphosphate hydrolysis which occurs prior to release of AdoMet from the enzyme. This Synechococcus sp. (strain JA-2-3B'a(2-13)) (Cyanobacteria bacterium Yellowstone B-Prime) protein is S-adenosylmethionine synthase.